The chain runs to 77 residues: Acyl carrier protein (77 aa).

One can recognise a Carrier domain in the interval 1–76; that stretch reads MATFDDVKAV…DVVNYIDNLK (76 aa). An O-(pantetheine 4'-phosphoryl)serine modification is found at serine 36.

The protein belongs to the acyl carrier protein (ACP) family. 4'-phosphopantetheine is transferred from CoA to a specific serine of apo-ACP by AcpS. This modification is essential for activity because fatty acids are bound in thioester linkage to the sulfhydryl of the prosthetic group.

The protein resides in the cytoplasm. It participates in lipid metabolism; fatty acid biosynthesis. Carrier of the growing fatty acid chain in fatty acid biosynthesis. This Campylobacter jejuni (strain RM1221) protein is Acyl carrier protein.